Consider the following 697-residue polypeptide: MAKTTKSFLALLRGGNLGVPLVILCILAMVILPLPPALLDILFTFNIVLAVMVLLVAVSAKRPLEFSLFPTILLITTLMRLTLNVASTRVVLLHGHLGAGAAGKVIESFGQVVIGGNFVVGFVVFIILMIINFIVVTKGAERISEVSARFTLDAMPGKQMAIDADLNAGLINQAQAQTRRKDVASEADFYGAMDGASKFVRGDAIAGMMILAINLIGGVCIGIFKYNLSADAAFQQYVLMTIGDGLVAQIPSLLLSTAAAIIVTRVSDNGDIAHDVRHQLLASPSVLYTATGIMFVLAVVPGMPHLPFLLFSALLGFTGWRMSKRPQAAEAEEKSLETLTRTITETSEQQVSWETIPLIEPISLSLGYKLVALVDKAQGNPLTQRIRGVRQVISDGNGVLLPEIRIRENFRLKPSQYAIFINGIKADEADIPADKLMALPSSETYGEIDGVLGNDPAYGMPVTWIQPAQKAKALNMGYQVIDSASVIATHVNKIVRSYIPDLFNYDDITQLHNRLSSMAPRLAEDLSAALNYSQLLKVYRALLTEGVSLRDIVTIATVLVASSTLTKDHILLAADVRLALRRSITHPFVRKQELTVYTLNNELENLLTNVVNQAQQAGKVMLDSVPVDPNMLNQFQSTMPQVKEQMKAAGKAPVLLVPPQLRPLLARYARLFAPGLHVLSYNEVPDELELKIMGALS.

A run of 7 helical transmembrane segments spans residues 19 to 39 (VPLV…PALL), 40 to 60 (DILF…AVSA), 66 to 86 (FSLF…LNVA), 116 to 136 (GNFV…FIVV), 204 to 224 (AIAG…IGIF), 242 to 262 (IGDG…AAII), and 280 to 302 (LLAS…VVPG).

This sequence belongs to the FHIPEP (flagella/HR/invasion proteins export pore) family.

Its subcellular location is the cell inner membrane. Part of the flagellar gene cluster Flag-2. However, the Flag-2 flagellar system could be inactive in strain 042 due to a frameshift in lfgC. The polypeptide is Putative flagellar export/assembly protein LfhA (Escherichia coli O44:H18 (strain 042 / EAEC)).